A 511-amino-acid chain; its full sequence is GMP synthase [glutamine-hydrolyzing] (511 aa).

Residues 5–195 (MILVLDFGGQ…LYNICGCKGD (191 aa)) form the Glutamine amidotransferase type-1 domain. Cysteine 82 functions as the Nucleophile in the catalytic mechanism. Active-site residues include histidine 169 and glutamate 171. The 191-residue stretch at 196 to 386 (WKMSSFVENS…LGIPEDLVWR (191 aa)) folds into the GMPS ATP-PPase domain. Residue 223–229 (SGGVDSS) participates in ATP binding.

Homodimer.

It carries out the reaction XMP + L-glutamine + ATP + H2O = GMP + L-glutamate + AMP + diphosphate + 2 H(+). Its pathway is purine metabolism; GMP biosynthesis; GMP from XMP (L-Gln route): step 1/1. Functionally, catalyzes the synthesis of GMP from XMP. The chain is GMP synthase [glutamine-hydrolyzing] from Ruminiclostridium cellulolyticum (strain ATCC 35319 / DSM 5812 / JCM 6584 / H10) (Clostridium cellulolyticum).